A 436-amino-acid polypeptide reads, in one-letter code: MQVSVESTSALERRMTVGVPAERIETEVNKRLQQTARRAKIPGFRPGKVPMSVIRQRYEASARQEAMGDLIQETFYEAVVEQKLNPAGSPSVEPKSFEKGKDLEYIATFEVFPEFTVSGLEDIKVERLQAEVSDADVDNMLDVLRKQNTRFEVVERAAQNDDQLNIDFVGKIDGEAFAGGSAKGTLLVLGSGRMIAGFEEGLVGAKAGEERVLNLTFPEDYQNLDLANKAAEFTVTVNSVAEPKLPELNEEFFALFGVKETGLDGFRAEVQKNMERELRQAIKSKVKNQVMEGLLQANPIEVPKALIGNEVNRLRVQAVQQFGGNIKPDQLPAELFEEQAKRRVVLGLIVAEVVKQHELKADEGRVREMIEEMASAYQEPEQVVAWYFKNEPQLNEVRSVVLEEQVVDTVLQKATVTDKQVSYEEAVKPAEAPQAA.

In terms of domain architecture, PPIase FKBP-type spans 161–246; the sequence is DDQLNIDFVG…VNSVAEPKLP (86 aa).

It belongs to the FKBP-type PPIase family. Tig subfamily.

The protein resides in the cytoplasm. It carries out the reaction [protein]-peptidylproline (omega=180) = [protein]-peptidylproline (omega=0). Involved in protein export. Acts as a chaperone by maintaining the newly synthesized protein in an open conformation. Functions as a peptidyl-prolyl cis-trans isomerase. This chain is Trigger factor, found in Pseudomonas aeruginosa (strain LESB58).